A 38-amino-acid polypeptide reads, in one-letter code: Large ribosomal subunit protein bL36c (38 aa).

It belongs to the bacterial ribosomal protein bL36 family.

It localises to the plastid. The protein resides in the apicoplast. This chain is Large ribosomal subunit protein bL36c (rpl36), found in Theileria parva (East coast fever infection agent).